The chain runs to 154 residues: Endoribonuclease YbeY (154 aa).

Positions 114, 118, and 124 each coordinate Zn(2+).

The protein belongs to the endoribonuclease YbeY family. Zn(2+) is required as a cofactor.

The protein resides in the cytoplasm. Single strand-specific metallo-endoribonuclease involved in late-stage 70S ribosome quality control and in maturation of the 3' terminus of the 16S rRNA. This is Endoribonuclease YbeY from Haemophilus influenzae (strain 86-028NP).